The following is an 89-amino-acid chain: Signal recognition particle 19 kDa protein (89 aa).

It belongs to the SRP19 family. In terms of assembly, part of the signal recognition particle protein translocation system, which is composed of SRP and FtsY. Archaeal SRP consists of a 7S RNA molecule of 300 nucleotides and two protein subunits: SRP54 and SRP19.

Its subcellular location is the cytoplasm. In terms of biological role, involved in targeting and insertion of nascent membrane proteins into the cytoplasmic membrane. Binds directly to 7S RNA and mediates binding of the 54 kDa subunit of the SRP. The protein is Signal recognition particle 19 kDa protein of Methanobrevibacter smithii (strain ATCC 35061 / DSM 861 / OCM 144 / PS).